The chain runs to 459 residues: Phosphoglucosamine mutase (459 aa).

Ser102 functions as the Phosphoserine intermediate in the catalytic mechanism. Residues Ser102, Asp243, Asp245, and Asp247 each contribute to the Mg(2+) site. Ser102 is modified (phosphoserine).

Belongs to the phosphohexose mutase family. Mg(2+) is required as a cofactor. Post-translationally, activated by phosphorylation.

The catalysed reaction is alpha-D-glucosamine 1-phosphate = D-glucosamine 6-phosphate. Its function is as follows. Catalyzes the conversion of glucosamine-6-phosphate to glucosamine-1-phosphate. The protein is Phosphoglucosamine mutase of Bartonella quintana (strain Toulouse) (Rochalimaea quintana).